The chain runs to 217 residues: Large ribosomal subunit protein uL1 (217 aa).

Belongs to the universal ribosomal protein uL1 family. In terms of assembly, component of the large ribosomal subunit (LSU). Mature ribosomes consist of a small (40S) and a large (60S) subunit. The 40S subunit contains about 32 different proteins and 1 molecule of RNA (18S). The 60S subunit contains 45 different proteins and 3 molecules of RNA (25S, 5.8S and 5S). uL1 forms part of the L1 stalk.

It is found in the cytoplasm. In terms of biological role, component of the ribosome, a large ribonucleoprotein complex responsible for the synthesis of proteins in the cell. The small ribosomal subunit (SSU) binds messenger RNAs (mRNAs) and translates the encoded message by selecting cognate aminoacyl-transfer RNA (tRNA) molecules. The large subunit (LSU) contains the ribosomal catalytic site termed the peptidyl transferase center (PTC), which catalyzes the formation of peptide bonds, thereby polymerizing the amino acids delivered by tRNAs into a polypeptide chain. The nascent polypeptides leave the ribosome through a tunnel in the LSU and interact with protein factors that function in enzymatic processing, targeting, and the membrane insertion of nascent chains at the exit of the ribosomal tunnel. uL1 forms part of the L1 stalk, a mobile element that plays a role in evacuating the exit-site tRNA. The protein is Large ribosomal subunit protein uL1 (RPL10A) of Candida albicans (strain SC5314 / ATCC MYA-2876) (Yeast).